The sequence spans 98 residues: SPbeta prophage-derived uncharacterized protein YorB (98 aa).

This is SPbeta prophage-derived uncharacterized protein YorB (yorB) from Bacillus subtilis (strain 168).